Here is a 304-residue protein sequence, read N- to C-terminus: UDP-3-O-acyl-N-acetylglucosamine deacetylase (304 aa).

Positions 78, 237, and 241 each coordinate Zn(2+). Residue His-264 is the Proton donor of the active site.

The protein belongs to the LpxC family. The cofactor is Zn(2+).

The catalysed reaction is a UDP-3-O-[(3R)-3-hydroxyacyl]-N-acetyl-alpha-D-glucosamine + H2O = a UDP-3-O-[(3R)-3-hydroxyacyl]-alpha-D-glucosamine + acetate. The protein operates within glycolipid biosynthesis; lipid IV(A) biosynthesis; lipid IV(A) from (3R)-3-hydroxytetradecanoyl-[acyl-carrier-protein] and UDP-N-acetyl-alpha-D-glucosamine: step 2/6. Catalyzes the hydrolysis of UDP-3-O-myristoyl-N-acetylglucosamine to form UDP-3-O-myristoylglucosamine and acetate, the committed step in lipid A biosynthesis. The polypeptide is UDP-3-O-acyl-N-acetylglucosamine deacetylase (Nitrosococcus oceani (strain ATCC 19707 / BCRC 17464 / JCM 30415 / NCIMB 11848 / C-107)).